A 99-amino-acid polypeptide reads, in one-letter code: Nucleoid-associated protein LL0120 (99 aa).

Belongs to the YbaB/EbfC family. As to quaternary structure, homodimer.

It is found in the cytoplasm. It localises to the nucleoid. Functionally, binds to DNA and alters its conformation. May be involved in regulation of gene expression, nucleoid organization and DNA protection. This Lactococcus lactis subsp. lactis (strain IL1403) (Streptococcus lactis) protein is Nucleoid-associated protein LL0120 (ybcG).